A 288-amino-acid chain; its full sequence is Pyrroline-5-carboxylate reductase 3 (288 aa).

It belongs to the pyrroline-5-carboxylate reductase family. As to quaternary structure, homodecamer; composed of 5 homodimers.

The protein resides in the cytoplasm. It carries out the reaction L-proline + NADP(+) = (S)-1-pyrroline-5-carboxylate + NADPH + 2 H(+). The enzyme catalyses L-proline + NAD(+) = (S)-1-pyrroline-5-carboxylate + NADH + 2 H(+). It participates in amino-acid biosynthesis; L-proline biosynthesis; L-proline from L-glutamate 5-semialdehyde: step 1/1. Oxidoreductase that catalyzes the last step in proline biosynthesis, which corresponds to the reduction of pyrroline-5-carboxylate (P5C) to L-proline using NAD(P)H. Proline is synthesized from either glutamate or ornithine; both are converted to P5C, and then to proline via pyrroline-5-carboxylate reductases (PYCRs). PYCR3 is exclusively linked to the biosynthesis of proline from ornithine. The polypeptide is Pyrroline-5-carboxylate reductase 3 (Danio rerio (Zebrafish)).